Reading from the N-terminus, the 421-residue chain is Vasopressin V1b receptor (421 aa).

The Extracellular segment spans residues Met1–Lys35. Asn21 carries an N-linked (GlcNAc...) asparagine glycan. A helical membrane pass occupies residues Val36–Leu59. Residues Gly60–Leu71 are Cytoplasmic-facing. The helical transmembrane segment at Phe72 to Leu93 threads the bilayer. The Extracellular portion of the chain corresponds to Trp94–Arg108. An intrachain disulfide couples Cys107 to Cys186. The helical transmembrane segment at Ala109–Leu130 threads the bilayer. Over Asp131–Tyr151 the chain is Cytoplasmic. Residues Pro152–Ser173 traverse the membrane as a helical segment. The Extracellular segment spans residues Leu174–Trp202. Residues Thr203–Cys223 traverse the membrane as a helical segment. At His224–Thr280 the chain is on the cytoplasmic side. Residues Phe281–Trp300 traverse the membrane as a helical segment. The Extracellular segment spans residues Ser301 to Thr318. A helical transmembrane segment spans residues Ile319 to Phe338. Residues Asn339–Ser421 lie on the Cytoplasmic side of the membrane. Residues Lys399–Ser421 are disordered.

Belongs to the G-protein coupled receptor 1 family. Vasopressin/oxytocin receptor subfamily.

It localises to the cell membrane. Its function is as follows. Receptor for arginine vasopressin. The activity of this receptor is mediated by G proteins which activate a phosphatidyl-inositol-calcium second messenger system. The protein is Vasopressin V1b receptor (Avpr1b) of Mus musculus (Mouse).